The chain runs to 282 residues: Major surface antigen 4 (282 aa).

The N-terminal stretch at 1-29 is a signal peptide; sequence MNYRELFTGGLSAATVCACSLLVSGAVVA.

Belongs to the surface antigen msp4 family.

The polypeptide is Major surface antigen 4 (msp4) (Anaplasma marginale).